Consider the following 276-residue polypeptide: NH(3)-dependent NAD(+) synthetase (276 aa).

43–50 (GISGGVDS) is a binding site for ATP. Mg(2+) is bound at residue Asp49. Deamido-NAD(+) is bound at residue Arg146. Residue Thr166 participates in ATP binding. Glu171 contributes to the Mg(2+) binding site. Deamido-NAD(+) is bound by residues Lys179 and Asp186. ATP contacts are provided by Lys195 and Thr217. 266–267 (HK) contacts deamido-NAD(+).

The protein belongs to the NAD synthetase family. Homodimer.

The catalysed reaction is deamido-NAD(+) + NH4(+) + ATP = AMP + diphosphate + NAD(+) + H(+). Its pathway is cofactor biosynthesis; NAD(+) biosynthesis; NAD(+) from deamido-NAD(+) (ammonia route): step 1/1. Its function is as follows. Catalyzes the ATP-dependent amidation of deamido-NAD to form NAD. Uses ammonia as a nitrogen source. The polypeptide is NH(3)-dependent NAD(+) synthetase (Vibrio campbellii (strain ATCC BAA-1116)).